A 611-amino-acid polypeptide reads, in one-letter code: MAAKIYDAIVIGGGHAGVEAAFILSKKNFNVALISLNQNRLASMPCNPSIGGPAKGIITREIDALGGKQAYFADQAMIQIKMLNTSKGPAVRAIRAQIDKEKYSQIILKAVQETKNIDLIEDMVFEIQTKDNKISGVITEKNGLLETKTAIITAGTYLDSYILRGEEKYSSGPDGEKTSNSLSNSLIKLGFKLLRLKTGTPPRIYANSIDFSEVEEEILPESNLNFSIYHSKKLSKQIHCYLTYTSEKTHQIILDNINKSSMYSGLIKGIGPRYCPSVEDKIVRFKDKERHQIFFEPETIKADIMYINGLSTSMPIDVQDQMIKSINGLKNAKVAKYAYAIEYDAIDPLQLKKSLESKEIENLFFAGQINGTSGYEEAAGQGLLAGINASLKLENREALNLKRSDSYIGVLIDDLTTKGTKEPYRMLTSRAEYRLLLRNDNADIRLLKYAKYAKTLTDKEIATTEAKYDLITKKIAELENQYISINDPLAKKYNLANSTSFLQLISRHEIDIKEIVGNFPFLEELSTNVRLDGYIKKQLSQADKMLRLENLKLPEDLNYDNVVNLAFEARQKLKMIKPLTIGQASRISGINPADIQMLMFHLNLKVVKNEN.

FAD contacts are provided by residues 12 to 17 (GGGHAG), Val124, and Ser179. 271–285 (GPRYCPSVEDKIVRF) is an NAD(+) binding site. Gln368 is an FAD binding site.

The protein belongs to the MnmG family. In terms of assembly, homodimer. Heterotetramer of two MnmE and two MnmG subunits. The cofactor is FAD.

The protein resides in the cytoplasm. Functionally, NAD-binding protein involved in the addition of a carboxymethylaminomethyl (cmnm) group at the wobble position (U34) of certain tRNAs, forming tRNA-cmnm(5)s(2)U34. This is tRNA uridine 5-carboxymethylaminomethyl modification enzyme MnmG from Mycoplasma mobile (strain ATCC 43663 / 163K / NCTC 11711) (Mesomycoplasma mobile).